The primary structure comprises 330 residues: Fructose-1,6-bisphosphatase class 1 (330 aa).

Mg(2+) contacts are provided by Glu-84, Asp-103, Leu-105, and Asp-106. Residues 106-109 (DGSS), Asn-196, and Lys-262 each bind substrate. A Mg(2+)-binding site is contributed by Glu-268.

This sequence belongs to the FBPase class 1 family. Homotetramer. Requires Mg(2+) as cofactor.

It localises to the cytoplasm. It catalyses the reaction beta-D-fructose 1,6-bisphosphate + H2O = beta-D-fructose 6-phosphate + phosphate. It functions in the pathway carbohydrate biosynthesis; gluconeogenesis. The polypeptide is Fructose-1,6-bisphosphatase class 1 (Shewanella sp. (strain ANA-3)).